Reading from the N-terminus, the 110-residue chain is Nucleoid-associated protein CbuK_1603 (110 aa).

It belongs to the YbaB/EbfC family. Homodimer.

The protein resides in the cytoplasm. The protein localises to the nucleoid. Binds to DNA and alters its conformation. May be involved in regulation of gene expression, nucleoid organization and DNA protection. The sequence is that of Nucleoid-associated protein CbuK_1603 from Coxiella burnetii (strain CbuK_Q154) (Coxiella burnetii (strain Q154)).